A 143-amino-acid polypeptide reads, in one-letter code: Peptide methionine sulfoxide reductase MsrB (143 aa).

Residues 16-139 enclose the MsrB domain; that stretch reads DAELRRRLTP…NSAALNFESR (124 aa). Residues cysteine 55, cysteine 58, cysteine 104, and cysteine 107 each contribute to the Zn(2+) site. The active-site Nucleophile is the cysteine 128.

It belongs to the MsrB Met sulfoxide reductase family. Requires Zn(2+) as cofactor.

The catalysed reaction is L-methionyl-[protein] + [thioredoxin]-disulfide + H2O = L-methionyl-(R)-S-oxide-[protein] + [thioredoxin]-dithiol. This is Peptide methionine sulfoxide reductase MsrB from Burkholderia cenocepacia (strain HI2424).